A 237-amino-acid chain; its full sequence is 7-cyano-7-deazaguanine synthase (237 aa).

15–25 (LSGGMDSTVCA) is an ATP binding site. Zn(2+) contacts are provided by Cys197, Cys205, Cys208, and Cys211.

It belongs to the QueC family. Zn(2+) is required as a cofactor.

It catalyses the reaction 7-carboxy-7-deazaguanine + NH4(+) + ATP = 7-cyano-7-deazaguanine + ADP + phosphate + H2O + H(+). It participates in purine metabolism; 7-cyano-7-deazaguanine biosynthesis. Catalyzes the ATP-dependent conversion of 7-carboxy-7-deazaguanine (CDG) to 7-cyano-7-deazaguanine (preQ(0)). This chain is 7-cyano-7-deazaguanine synthase, found in Koribacter versatilis (strain Ellin345).